The chain runs to 454 residues: tRNA modification GTPase MnmE (454 aa).

(6S)-5-formyl-5,6,7,8-tetrahydrofolate is bound by residues R23, E80, and K120. One can recognise a TrmE-type G domain in the interval 216–377 (GMKVVIAGRP…LRNHLKQSMG (162 aa)). Position 226 (N226) interacts with K(+). Residues 226 to 231 (NAGKSS), 245 to 251 (TDIAGTT), 270 to 273 (DTAG), 335 to 338 (NKAD), and 358 to 360 (SAR) contribute to the GTP site. S230 serves as a coordination point for Mg(2+). Residues T245, I247, and T250 each contribute to the K(+) site. Mg(2+) is bound at residue T251. K454 contacts (6S)-5-formyl-5,6,7,8-tetrahydrofolate.

It belongs to the TRAFAC class TrmE-Era-EngA-EngB-Septin-like GTPase superfamily. TrmE GTPase family. Homodimer. Heterotetramer of two MnmE and two MnmG subunits. Requires K(+) as cofactor.

It is found in the cytoplasm. Exhibits a very high intrinsic GTPase hydrolysis rate. Involved in the addition of a carboxymethylaminomethyl (cmnm) group at the wobble position (U34) of certain tRNAs, forming tRNA-cmnm(5)s(2)U34. The sequence is that of tRNA modification GTPase MnmE from Escherichia coli (strain 55989 / EAEC).